A 952-amino-acid chain; its full sequence is Inactive atromentin synthetase invA6 (952 aa).

The interval 58-462 is adenylation (A) domain; the sequence is DSSVQTRSFS…NGRIKDTVIV (405 aa). Positions 594 to 672 constitute a Carrier domain; the sequence is APSTETEKTL…SLAKYVDSLV (79 aa). Positions 599-669 are thiolation and peptide carrier (T) domain; that stretch reads TEKTLGRLYA…VISSLAKYVD (71 aa). Residue Ser631 is modified to O-(pantetheine 4'-phosphoryl)serine. Positions 695 to 939 are thioesterase (TE) domain; sequence PIFMVHPGIG…LMDFDHVSGF (245 aa).

The protein belongs to the ATP-dependent AMP-binding enzyme family.

In terms of biological role, inactive atromentin synthetase homolog. Does not accept 4-hydroxyphenylpyruvate (4-HPP) as substrate. Both the adenylation (A) and the thioesterase (TE) domain of the invA6 enzyme are inactive. The sequence is that of Inactive atromentin synthetase invA6 (invA6) from Paxillus involutus (Naked brimcap).